The primary structure comprises 1164 residues: Toxin subunit YenA1 (1164 aa).

Residues 106–131 (RLEKSNSPLVPQTSSSTDASSESQTN) are disordered. Over residues 118-130 (TSSSTDASSESQT) the composition is skewed to low complexity.

In terms of assembly, semipurified toxin complex consists of at least YenA1, YenA2, YenB, YenC1, YenC2, Chi1 and Chi2. The Yen-TC:K9 subcomplex is about 26 nm tall and 22 nm in diameter with 5-fold symmetry and 5 copies of YenA1, YenA2, Chi1 and Chi2; the chitinase subunits may be solvent accessible on the exterior the complex. The Yen-TC:K9 subcomplex has no insecticidal activity. The native complex with additional YenB, YenC1 and YenC2 subunits is 16 nm taller and is insecticidal; the toxicity-conferring subunits are present at about 1 copy each.

Its subcellular location is the secreted. Its activity is regulated as follows. Toxin complex is secreted when grown at 25 degrees Celsius or less; at higher temperatures the proteins are present intracellularly but not secreted. Functionally, part of an orally active toxin complex (TC) with strong insecticidal effects on larvae of the Coleoptera Costelytra zealandica, Acrossidius tasmania and Adoryphorus couloni and some Lepidoptera larvae. The TC has an endochitinase activity. This chain is Toxin subunit YenA1, found in Yersinia entomophaga.